The sequence spans 439 residues: Serine/threonine-protein kinase 2 (439 aa).

The region spanning 87–439 (NDDFYHISTG…IFSDWINGGN (353 aa)) is the Protein kinase domain. ATP-binding positions include 93–101 (ISTGGYGIV) and K117. D307 functions as the Proton acceptor in the catalytic mechanism.

The protein belongs to the protein kinase superfamily. Ser/Thr protein kinase family. Poxviruses subfamily. In terms of processing, phosphorylated in vivo. Autophosphorylated in vitro.

The protein resides in the host endoplasmic reticulum. It is found in the host endoplasmic reticulum-Golgi intermediate compartment. The enzyme catalyses L-seryl-[protein] + ATP = O-phospho-L-seryl-[protein] + ADP + H(+). It catalyses the reaction L-threonyl-[protein] + ATP = O-phospho-L-threonyl-[protein] + ADP + H(+). Essential serine-protein kinase involved in the early stage of virion morphogenesis. The polypeptide is Serine/threonine-protein kinase 2 (OPG054) (Vaccinia virus (strain Copenhagen) (VACV)).